A 1420-amino-acid polypeptide reads, in one-letter code: MSSDASTYRLEDVLSSFYRVEKIKKINYHQYISKAQNDQWSIQMEFMLRKQDPKTLVALLSRDLWCFSINDDPVPTPPAIEHKPVSPDKIGTFTADYSKPNLPPHYALFLKALRRKIYINLALGSHNKLIQFGNACISLSGVPNYLVQLEPHLFVNGDLTVSLCAKNMGLVPMKEENLEESFLSKHALYLAPSGIRMHLAPASKQGYLITPPKHTELLLTTLSVSHGINLQNKKNLKWVAVVPDLGHLNGHTPTIASYLTPLLEAKKLVWPLHLIFAQPVADIENSTSGDPSEFHCLQDALDAIDDFIQLKQTAAYRTPGSSGVLSSNIAGTNPLSSDGAYTEQFQHYKNNSISSQPASYHSVQETNKISPKDFSPNFTGIDKLMLSPSDQFAPAFLNTPNNNINENELFNDRKQTTVSNDLENSPLKTELEANGRSLEKVNNSVSKTGSVDTLHNKEGTLEQREQNENLPSDKSDSMVDKELFGEDEDEDLFGDSNKSNSTNESNKSISDEITEDMFEMSDEEENNNNKSINKNNKEMHTDLGKDIPFFPSSEKPNIRTMSGTTKRLNGKRKYLDIPIDEMTLPTSPLYMDPGAPLPVETPRDRRKSVFAPLNFNPIIENNVDNKYKSGGKFSFSPLQKEEALNFDISMADLSSSEEEEDEEENGSSDEDLKSLNVRDDMKPSDNISTNTNIHEPQYINYSSIPSLQDSIIKQENFNSVNDANITSNKEGFNSIWKIPQNDIPQTESPLKTVDSSIQPIESNIKMTLEDNNVTSNPSEFTPNMVNSEISNLPKDKSGIPEFTPADPNLSFESSSSLPFLLRHMPLASIPDIFITPTPVVTISEKEQDILDLIAEQVVTDYNILGNLGIPKIAYRGVKDCQEGLITTTMLQLFSTFDRLNGNDTISKFYNMKQPYVFVKKHHELIKVKHDSQPFIKFLNFRPPNGIKNFKSLLLSSSFKEDCLSFAPTLSQTYINQELGFCELLKLTNEDPPGLMYLKAFDKNKLLLLAAQIVSYCSNNKNSIKNVPPILIILPLDNATLTELVDKANIFQVIKNEVCAKMPNIELYLKVIPMDFIRNVLVTVDQYVNVAISIYNMLPPKSVKFTHIAHTLPEKVNFRTMQQQQMQQQQQQQQQQQNNSTGSSSIIYYDSYIHLAYSRSVDKEWVFAALSDSYGQGSMTKTWYVGNSRGKFDDACNQIWNIALNLASKKFGKICLILTRLNGILPDDELMNWRRLSGRNIHLAVVCVDDNSKISFIDEDKLYPSFKPIYKDTRFGGRMDMTRLYDYEIRDIDQDIHGIVFQHPFPLAHSQHRCAIRSGALIKFKKCDGDTVWDKFAVNLLNCPHSDSTQLLETILEEFRNLAALNVWYGLSDGEDGHIPWHILAVKKMMNTLVHTRVKIANTSAATVHTATSSSIILSDK.

Residues S370, S375, and S425 each carry the phosphoserine modification. The segment covering 416 to 427 (TTVSNDLENSPL) has biased composition (polar residues). Residues 416–511 (TTVSNDLENS…TNESNKSISD (96 aa)) are disordered. Basic and acidic residues predominate over residues 429 to 439 (TELEANGRSLE). A compositionally biased stretch (polar residues) spans 440–453 (KVNNSVSKTGSVDT). Basic and acidic residues predominate over residues 454–484 (LHNKEGTLEQREQNENLPSDKSDSMVDKELF). The span at 494–508 (GDSNKSNSTNESNKS) shows a compositional bias: low complexity. T601 bears the Phosphothreonine mark. The residue at position 608 (S608) is a Phosphoserine; by PKA. Phosphoserine is present on S636. A disordered region spans residues 653–691 (LSSSEEEEDEEENGSSDEDLKSLNVRDDMKPSDNISTNT). Over residues 655–669 (SSEEEEDEEENGSSD) the composition is skewed to acidic residues. The span at 670–683 (EDLKSLNVRDDMKP) shows a compositional bias: basic and acidic residues. A Phosphoserine modification is found at S748.

This sequence belongs to the Mediator complex subunit 13 family. Component of the SRB8-11 complex which consists of SRB8, SSN2/SRB9, SSN3/SRB10 and SSN8/SRB11. The SRB8-11 complex associates with the Mediator complex. The SSN3/SRB10 and SSN8/SRB11 kinase-cyclin pair also associate with the RNA polymerase II holoenzyme. Post-translationally, phosphorylated. PKA-dependent phosphorylation at 'Ser-608' is enhanced by activation of the RAS signaling pathway.

It is found in the nucleus. Its function is as follows. Component of the SRB8-11 complex. The SRB8-11 complex is a regulatory module of the Mediator complex which is itself involved in regulation of basal and activated RNA polymerase II-dependent transcription. The SRB8-11 complex may be involved in the transcriptional repression of a subset of genes regulated by Mediator. It may inhibit the association of the Mediator complex with RNA polymerase II to form the holoenzyme complex. The SRB8-11 complex phosphorylates the C-terminal domain (CTD) of the largest subunit of RNA polymerase II RPB1 at serines 2 and 5. The sequence is that of Mediator of RNA polymerase II transcription subunit 13 (SSN2) from Saccharomyces cerevisiae (strain ATCC 204508 / S288c) (Baker's yeast).